Consider the following 492-residue polypeptide: Stomatal closure-related actin-binding protein 2 (492 aa).

Positions 112–132 form a coiled coil; the sequence is LKKLRDALETMRGRMDGRNRE.

This sequence belongs to the SCAB family. Expressed in roots, stems, leaves, siliques and flowers.

Its subcellular location is the cytoplasm. The protein localises to the cytoskeleton. Functionally, probable plant-specific actin binding protein that bundles and stabilizes microfilaments (MFs). The polypeptide is Stomatal closure-related actin-binding protein 2 (Arabidopsis thaliana (Mouse-ear cress)).